The sequence spans 230 residues: Cytidylate kinase (230 aa).

Gly-12–Thr-20 is an ATP binding site.

The protein belongs to the cytidylate kinase family. Type 1 subfamily.

It is found in the cytoplasm. The catalysed reaction is CMP + ATP = CDP + ADP. It carries out the reaction dCMP + ATP = dCDP + ADP. In Aeromonas salmonicida (strain A449), this protein is Cytidylate kinase.